A 309-amino-acid chain; its full sequence is 2-dehydropantoate 2-reductase (309 aa).

Residues 7-12 (GAGSIG), R31, and K74 each bind NADP(+). CoA-binding positions include 8–10 (AGS), R31, K74, and C84. NADP(+) contacts are provided by N100 and A124. K180 serves as the catalytic Proton donor. Substrate is bound by residues K180, N184, N188, N198, and 247 to 250 (NYNS). R257 lines the CoA pocket. E262 is a binding site for NADP(+).

The protein belongs to the ketopantoate reductase family. In terms of assembly, homodimer.

It localises to the cytoplasm. The enzyme catalyses (R)-pantoate + NAD(+) = 2-dehydropantoate + NADH + H(+). It carries out the reaction (R)-pantoate + NADP(+) = 2-dehydropantoate + NADPH + H(+). It functions in the pathway cofactor biosynthesis; coenzyme A biosynthesis. Its activity is regulated as follows. Regulated by feedback inhibition by coenzyme A (CoA). CoA acts by competing with NAD(P)H. A disulfide bond is formed between CoA and Cys-84, which indicates an irreversible inhibition upon binding of CoA. Its function is as follows. Catalyzes the NAD(P)H-dependent reduction of ketopantoate into pantoic acid. Prefers NADH rather than NADPH as the electron donor. This chain is 2-dehydropantoate 2-reductase, found in Thermococcus kodakarensis (strain ATCC BAA-918 / JCM 12380 / KOD1) (Pyrococcus kodakaraensis (strain KOD1)).